Reading from the N-terminus, the 407-residue chain is Imidazolonepropionase (407 aa).

Residues His68 and His70 each contribute to the Fe(3+) site. His68 and His70 together coordinate Zn(2+). Arg77, Tyr140, and His173 together coordinate 4-imidazolone-5-propanoate. Residue Tyr140 coordinates N-formimidoyl-L-glutamate. Residue His238 participates in Fe(3+) binding. Zn(2+) is bound at residue His238. A 4-imidazolone-5-propanoate-binding site is contributed by Gln241. Asp313 lines the Fe(3+) pocket. Position 313 (Asp313) interacts with Zn(2+). N-formimidoyl-L-glutamate-binding residues include Asn315 and Gly317. Thr318 contributes to the 4-imidazolone-5-propanoate binding site.

Belongs to the metallo-dependent hydrolases superfamily. HutI family. The cofactor is Zn(2+). Requires Fe(3+) as cofactor.

The protein resides in the cytoplasm. The catalysed reaction is 4-imidazolone-5-propanoate + H2O = N-formimidoyl-L-glutamate. Its pathway is amino-acid degradation; L-histidine degradation into L-glutamate; N-formimidoyl-L-glutamate from L-histidine: step 3/3. In terms of biological role, catalyzes the hydrolytic cleavage of the carbon-nitrogen bond in imidazolone-5-propanoate to yield N-formimidoyl-L-glutamate. It is the third step in the universal histidine degradation pathway. The sequence is that of Imidazolonepropionase from Burkholderia cenocepacia (strain HI2424).